Here is a 110-residue protein sequence, read N- to C-terminus: Quaternary ammonium compound-resistance protein QacE (110 aa).

A run of 4 helical transmembrane segments spans residues 1 to 21 (MKGW…TSAL), 30 to 50 (LAPS…LSLV), 58 to 78 (VAYA…AWLL), and 85 to 105 (AWGF…NLLS).

It belongs to the drug/metabolite transporter (DMT) superfamily. Small multidrug resistance (SMR) (TC 2.A.7.1) family.

It is found in the cell membrane. In terms of biological role, multidrug exporter. Is implicated for the resistance to bacteriocidal quaternary ammonium compounds. The sequence is that of Quaternary ammonium compound-resistance protein QacE (qacE) from Escherichia coli.